The following is a 179-amino-acid chain: Nucleoside-triphosphatase THEP1 (179 aa).

ATP is bound by residues 7 to 14 (GMPGVGKT) and 98 to 105 (IIIIDEIG).

Belongs to the THEP1 NTPase family.

The catalysed reaction is a ribonucleoside 5'-triphosphate + H2O = a ribonucleoside 5'-diphosphate + phosphate + H(+). Functionally, has nucleotide phosphatase activity towards ATP, GTP, CTP, TTP and UTP. May hydrolyze nucleoside diphosphates with lower efficiency. In Pyrococcus abyssi (strain GE5 / Orsay), this protein is Nucleoside-triphosphatase THEP1.